Reading from the N-terminus, the 221-residue chain is Lipoprotein-releasing system ATP-binding protein LolD (221 aa).

Positions 6–220 constitute an ABC transporter domain; the sequence is LTLKNVSKHY…YKLKHGALNM (215 aa). 42–49 contacts ATP; the sequence is GSSGSGKS.

It belongs to the ABC transporter superfamily. Lipoprotein translocase (TC 3.A.1.125) family. As to quaternary structure, the complex is composed of two ATP-binding proteins (LolD) and two transmembrane proteins (LolC and LolE).

The protein resides in the cell inner membrane. Functionally, part of the ABC transporter complex LolCDE involved in the translocation of mature outer membrane-directed lipoproteins, from the inner membrane to the periplasmic chaperone, LolA. Responsible for the formation of the LolA-lipoprotein complex in an ATP-dependent manner. The polypeptide is Lipoprotein-releasing system ATP-binding protein LolD (Rickettsia bellii (strain RML369-C)).